The chain runs to 210 residues: T-cell surface glycoprotein CD8 beta-2 chain (210 aa).

The first 18 residues, 1–18 (MRPRLWLLLAAQLTVLHG), serve as a signal peptide directing secretion. Residues 19 to 132 (NSVLQQTPAY…ELTFGKGTQL (114 aa)) form the Ig-like V-type domain. Over 19 to 170 (NSVLQQTPAY…ETQKGPLCSP (152 aa)) the chain is Extracellular. Cys41 and Cys116 are oxidised to a cystine. Asn102 carries an N-linked (GlcNAc...) asparagine glycan. A helical transmembrane segment spans residues 171 to 191 (VTLGLLVAGVLVLLVSLGVAM). The Cytoplasmic segment spans residues 192–210 (HLCCRRRRARLRFMKQFYK).

As to quaternary structure, in general heterodimer of an alpha and a beta chain linked by two disulfide bonds.

It localises to the cell membrane. Its function is as follows. Identifies cytotoxic/suppressor T-cells that interact with MHC class I bearing targets. CD8 is thought to play a role in the process of T-cell mediated killing. The polypeptide is T-cell surface glycoprotein CD8 beta-2 chain (Homo sapiens (Human)).